Consider the following 879-residue polypeptide: Metabotropic glutamate receptor 3 (879 aa).

Positions 1-22 (MKMLTRLQVLTLALFSKGFLLS) are cleaved as a signal peptide. The Extracellular portion of the chain corresponds to 23–576 (LGDHNFLRRE…EDYIRWEDAW (554 aa)). The cysteines at positions 57 and 99 are disulfide-linked. L-glutamate contacts are provided by residues Ser-151 and 172-174 (AST). A glycan (N-linked (GlcNAc...) asparagine) is linked at Asn-209. Tyr-222 serves as a coordination point for L-glutamate. Cystine bridges form between Cys-240–Cys-527, Cys-361–Cys-373, Cys-412–Cys-419, Cys-509–Cys-528, Cys-513–Cys-531, Cys-534–Cys-546, and Cys-549–Cys-562. N-linked (GlcNAc...) asparagine glycosylation is present at Asn-292. Asp-301 provides a ligand contact to L-glutamate. Lys-389 serves as a coordination point for L-glutamate. Residues Asn-414 and Asn-439 are each glycosylated (N-linked (GlcNAc...) asparagine). Residues 577 to 599 (AIGPVTIACLGFMCTCMVVTVFI) traverse the membrane as a helical segment. Over 600–613 (KHNNTPLVKASGRE) the chain is Cytoplasmic. A helical transmembrane segment spans residues 614-634 (LCYILLFGVGLSYCMTFFFIA). Residues 635–645 (KPSPVICALRR) lie on the Extracellular side of the membrane. The chain crosses the membrane as a helical span at residues 646–664 (LGLGSSFAICYSALLTKTN). At 665-688 (CIARIFDGVKNGAQRPKFISPSSQ) the chain is on the cytoplasmic side. The helical transmembrane segment at 689–709 (VFICLGLILVQIVMVSVWLIL) threads the bilayer. Topologically, residues 710–734 (EAPGTRRYTLAEKRETVILKCNVKD) are extracellular. A helical transmembrane segment spans residues 735–756 (SSMLISLTYDVILVILCTVYAF). Over 757–769 (KTRKCPENFNEAK) the chain is Cytoplasmic. The chain crosses the membrane as a helical span at residues 770 to 792 (FIGFTMYTTCIIWLAFLPIFYVT). Topologically, residues 793 to 802 (SSDYRVQTTT) are extracellular. A helical membrane pass occupies residues 803-828 (MCISVSLSGFVVLGCLFAPKVHIILF). Residues 829 to 879 (QPQKNVVTHRLHLNRFSVSGTGTTYSQSSASTYVPTVCNGREVLDSTTSSL) are Cytoplasmic-facing.

Belongs to the G-protein coupled receptor 3 family. As to quaternary structure, interacts with TAMALIN. As to expression, detected in brain cortex, thalamus, subthalamic nucleus, substantia nigra, hypothalamus, hippocampus, corpus callosum, caudate nucleus and amygdala.

It is found in the cell membrane. Its function is as follows. G-protein coupled receptor for glutamate. Ligand binding causes a conformation change that triggers signaling via guanine nucleotide-binding proteins (G proteins) and modulates the activity of down-stream effectors. Signaling inhibits adenylate cyclase activity. The protein is Metabotropic glutamate receptor 3 (GRM3) of Homo sapiens (Human).